The chain runs to 302 residues: UDP-3-O-acyl-N-acetylglucosamine deacetylase (302 aa).

Positions 78, 237, and 241 each coordinate Zn(2+). Histidine 264 serves as the catalytic Proton donor.

This sequence belongs to the LpxC family. It depends on Zn(2+) as a cofactor.

The catalysed reaction is a UDP-3-O-[(3R)-3-hydroxyacyl]-N-acetyl-alpha-D-glucosamine + H2O = a UDP-3-O-[(3R)-3-hydroxyacyl]-alpha-D-glucosamine + acetate. The protein operates within glycolipid biosynthesis; lipid IV(A) biosynthesis; lipid IV(A) from (3R)-3-hydroxytetradecanoyl-[acyl-carrier-protein] and UDP-N-acetyl-alpha-D-glucosamine: step 2/6. In terms of biological role, catalyzes the hydrolysis of UDP-3-O-myristoyl-N-acetylglucosamine to form UDP-3-O-myristoylglucosamine and acetate, the committed step in lipid A biosynthesis. This is UDP-3-O-acyl-N-acetylglucosamine deacetylase from Hahella chejuensis (strain KCTC 2396).